Here is a 176-residue protein sequence, read N- to C-terminus: Nudix hydrolase 18, mitochondrial (176 aa).

The N-terminal 21 residues, 1-21, are a transit peptide targeting the mitochondrion; it reads MVCLVSRTGRQSQRYNKGRRQ. In terms of domain architecture, Nudix hydrolase spans 22 to 153; the sequence is VVGCIPYRLK…WMKEALDVLV (132 aa). Residues 60-81 carry the Nudix box motif; it reads GGWELDESVEEAASRESLEEAG. 2 residues coordinate Mg(2+): Glu-75 and Glu-79.

The protein belongs to the Nudix hydrolase family. It depends on Mg(2+) as a cofactor. Requires Mn(2+) as cofactor. Expressed in roots, stems and inflorescences.

The protein resides in the mitochondrion. Probably mediates the hydrolysis of some nucleoside diphosphate derivatives. This chain is Nudix hydrolase 18, mitochondrial (NUDT18), found in Arabidopsis thaliana (Mouse-ear cress).